A 365-amino-acid chain; its full sequence is Probable dual-specificity RNA methyltransferase RlmN (365 aa).

Glu108 (proton acceptor) is an active-site residue. The Radical SAM core domain maps to 114 to 347 (HNYGNSVCVT…VTIRREHGHD (234 aa)). Cysteines 121 and 352 form a disulfide. 3 residues coordinate [4Fe-4S] cluster: Cys128, Cys132, and Cys135. S-adenosyl-L-methionine-binding positions include 178-179 (GE), Ser210, 233-235 (SLH), and Asn309. Residue Cys352 is the S-methylcysteine intermediate of the active site.

This sequence belongs to the radical SAM superfamily. RlmN family. The cofactor is [4Fe-4S] cluster.

The protein resides in the cytoplasm. The enzyme catalyses adenosine(2503) in 23S rRNA + 2 reduced [2Fe-2S]-[ferredoxin] + 2 S-adenosyl-L-methionine = 2-methyladenosine(2503) in 23S rRNA + 5'-deoxyadenosine + L-methionine + 2 oxidized [2Fe-2S]-[ferredoxin] + S-adenosyl-L-homocysteine. It carries out the reaction adenosine(37) in tRNA + 2 reduced [2Fe-2S]-[ferredoxin] + 2 S-adenosyl-L-methionine = 2-methyladenosine(37) in tRNA + 5'-deoxyadenosine + L-methionine + 2 oxidized [2Fe-2S]-[ferredoxin] + S-adenosyl-L-homocysteine. Specifically methylates position 2 of adenine 2503 in 23S rRNA and position 2 of adenine 37 in tRNAs. The sequence is that of Probable dual-specificity RNA methyltransferase RlmN from Geobacillus kaustophilus (strain HTA426).